The primary structure comprises 399 residues: 1-deoxy-D-xylulose 5-phosphate reductoisomerase (399 aa).

Residues threonine 13, glycine 14, serine 15, isoleucine 16, and asparagine 127 each contribute to the NADPH site. Position 128 (lysine 128) interacts with 1-deoxy-D-xylulose 5-phosphate. Glutamate 129 lines the NADPH pocket. Aspartate 153 serves as a coordination point for Mn(2+). 4 residues coordinate 1-deoxy-D-xylulose 5-phosphate: serine 154, glutamate 155, serine 187, and histidine 210. Glutamate 155 is a binding site for Mn(2+). Position 216 (glycine 216) interacts with NADPH. 4 residues coordinate 1-deoxy-D-xylulose 5-phosphate: serine 223, asparagine 228, lysine 229, and glutamate 232. A Mn(2+)-binding site is contributed by glutamate 232.

This sequence belongs to the DXR family. Mg(2+) is required as a cofactor. Mn(2+) serves as cofactor.

It carries out the reaction 2-C-methyl-D-erythritol 4-phosphate + NADP(+) = 1-deoxy-D-xylulose 5-phosphate + NADPH + H(+). It functions in the pathway isoprenoid biosynthesis; isopentenyl diphosphate biosynthesis via DXP pathway; isopentenyl diphosphate from 1-deoxy-D-xylulose 5-phosphate: step 1/6. Its function is as follows. Catalyzes the NADPH-dependent rearrangement and reduction of 1-deoxy-D-xylulose-5-phosphate (DXP) to 2-C-methyl-D-erythritol 4-phosphate (MEP). In Bordetella avium (strain 197N), this protein is 1-deoxy-D-xylulose 5-phosphate reductoisomerase.